A 240-amino-acid chain; its full sequence is 1-(5-phosphoribosyl)-5-[(5-phosphoribosylamino)methylideneamino] imidazole-4-carboxamide isomerase (240 aa).

The active-site Proton acceptor is aspartate 8. Aspartate 129 serves as the catalytic Proton donor.

Belongs to the HisA/HisF family.

The protein localises to the cytoplasm. It carries out the reaction 1-(5-phospho-beta-D-ribosyl)-5-[(5-phospho-beta-D-ribosylamino)methylideneamino]imidazole-4-carboxamide = 5-[(5-phospho-1-deoxy-D-ribulos-1-ylimino)methylamino]-1-(5-phospho-beta-D-ribosyl)imidazole-4-carboxamide. The protein operates within amino-acid biosynthesis; L-histidine biosynthesis; L-histidine from 5-phospho-alpha-D-ribose 1-diphosphate: step 4/9. This Listeria welshimeri serovar 6b (strain ATCC 35897 / DSM 20650 / CCUG 15529 / CIP 8149 / NCTC 11857 / SLCC 5334 / V8) protein is 1-(5-phosphoribosyl)-5-[(5-phosphoribosylamino)methylideneamino] imidazole-4-carboxamide isomerase.